A 301-amino-acid polypeptide reads, in one-letter code: Mitochondrial substrate carrier family protein X (301 aa).

The Mitochondrial intermembrane segment spans residues M1–N23. 3 Solcar repeats span residues P18 to R109, I117 to N199, and I208 to F296. The helical transmembrane segment at L24 to V44 threads the bilayer. Residues K45–E75 are Mitochondrial matrix-facing. A helical transmembrane segment spans residues G76–A97. The Mitochondrial intermembrane portion of the chain corresponds to L98–E122. A helical transmembrane segment spans residues V123–V143. Residues K144–K173 lie on the Mitochondrial matrix side of the membrane. The chain crosses the membrane as a helical span at residues G174 to G194. Topologically, residues R195–E207 are mitochondrial intermembrane. The helical transmembrane segment at I208 to S228 threads the bilayer. Residues T229 to G271 lie on the Mitochondrial matrix side of the membrane. The chain crosses the membrane as a helical span at residues V272–I292. The Mitochondrial intermembrane segment spans residues Q293–H301.

It belongs to the mitochondrial carrier (TC 2.A.29) family.

It is found in the mitochondrion inner membrane. Functionally, mitochondrial solute carriers shuttle metabolites, nucleotides, and cofactors through the mitochondrial inner membrane. This chain is Mitochondrial substrate carrier family protein X (mcfX), found in Dictyostelium discoideum (Social amoeba).